Reading from the N-terminus, the 868-residue chain is LPS-assembly protein LptD (868 aa).

The first 24 residues, 1–24 (MLKGIHKYLLMCFGTVLFTVQANA), serve as a signal peptide directing secretion.

This sequence belongs to the LptD family. As to quaternary structure, component of the lipopolysaccharide transport and assembly complex. Interacts with LptE and LptA.

Its subcellular location is the cell outer membrane. In terms of biological role, together with LptE, is involved in the assembly of lipopolysaccharide (LPS) at the surface of the outer membrane. The protein is LPS-assembly protein LptD of Francisella tularensis subsp. novicida (strain U112).